We begin with the raw amino-acid sequence, 79 residues long: Large ribosomal subunit protein uL24 (79 aa).

The segment at 1-29 (MPKLKKLLLKVSTSKPNTNPPSQNEEKGT) is disordered. Positions 11 to 23 (VSTSKPNTNPPSQ) are enriched in polar residues.

This sequence belongs to the universal ribosomal protein uL24 family. In terms of assembly, part of the 50S ribosomal subunit.

In terms of biological role, one of two assembly initiator proteins, it binds directly to the 5'-end of the 23S rRNA, where it nucleates assembly of the 50S subunit. One of the proteins that surrounds the polypeptide exit tunnel on the outside of the subunit. This is Large ribosomal subunit protein uL24 (rplX) from Onion yellows phytoplasma (strain OY-M).